Here is an 804-residue protein sequence, read N- to C-terminus: DNA mismatch repair protein MutS (804 aa).

Position 614–621 (Gly-614–Ser-621) interacts with ATP.

The protein belongs to the DNA mismatch repair MutS family.

Its function is as follows. This protein is involved in the repair of mismatches in DNA. It is possible that it carries out the mismatch recognition step. This protein has a weak ATPase activity. This chain is DNA mismatch repair protein MutS, found in Ehrlichia ruminantium (strain Gardel).